The chain runs to 419 residues: DNA ligase (419 aa).

The interval methionine 1 to asparagine 120 is NTD. The interval threonine 121–leucine 317 is AD domain. Lysine 151 (N6-AMP-lysine intermediate) is an active-site residue. The OB domain stretch occupies residues lysine 318–isoleucine 419.

Belongs to the ATP-dependent DNA ligase family.

Its subcellular location is the virion. It catalyses the reaction ATP + (deoxyribonucleotide)n-3'-hydroxyl + 5'-phospho-(deoxyribonucleotide)m = (deoxyribonucleotide)n+m + AMP + diphosphate.. Functionally, very low-fidelity DNA ligase that seals nicks in double-stranded DNA during DNA repair. Together with the viral repair DNA polymerase X, fills the single nucleotide gaps generated by the AP endonuclease. It is not essential for viral replication and recombination. Displays a very low adenylation activity towards DNA with 3'-dideoxy- or 3'-amino-terminated nicks compared to regular nick DNA. The polypeptide is DNA ligase (Ornithodoros (relapsing fever ticks)).